Reading from the N-terminus, the 382-residue chain is Anhydro-N-acetylmuramic acid kinase (382 aa).

22 to 29 (GTSMDGVD) contributes to the ATP binding site.

This sequence belongs to the anhydro-N-acetylmuramic acid kinase family.

It carries out the reaction 1,6-anhydro-N-acetyl-beta-muramate + ATP + H2O = N-acetyl-D-muramate 6-phosphate + ADP + H(+). Its pathway is amino-sugar metabolism; 1,6-anhydro-N-acetylmuramate degradation. The protein operates within cell wall biogenesis; peptidoglycan recycling. Its function is as follows. Catalyzes the specific phosphorylation of 1,6-anhydro-N-acetylmuramic acid (anhMurNAc) with the simultaneous cleavage of the 1,6-anhydro ring, generating MurNAc-6-P. Is required for the utilization of anhMurNAc either imported from the medium or derived from its own cell wall murein, and thus plays a role in cell wall recycling. In Burkholderia cenocepacia (strain ATCC BAA-245 / DSM 16553 / LMG 16656 / NCTC 13227 / J2315 / CF5610) (Burkholderia cepacia (strain J2315)), this protein is Anhydro-N-acetylmuramic acid kinase.